The following is a 494-amino-acid chain: Syntaphilin (494 aa).

The interval 1-75 (MAMSLPGSRR…GIKPPTPEQY (75 aa)) is disordered. The span at 7 to 49 (GSRRTSAGSRRRTSPPVSVRDAYGTSSLSSSSNSGSYKGSDSS) shows a compositional bias: low complexity. The stretch at 79 to 161 (LQQKEVCIRH…VKNNLIDKDK (83 aa)) forms a coiled coil. Disordered regions lie at residues 191-246 (MAKE…SGFA) and 338-398 (CGTD…GQSV). Ser200 and Ser204 each carry phosphoserine. Polar residues predominate over residues 207-217 (RSLTRSSTYTK). Position 214 is a phosphothreonine (Thr214). Ser219 carries the post-translational modification Phosphoserine. Low complexity predominate over residues 230-246 (GDPSSGSAEDGADSGFA). The segment covering 344-353 (SGDRCPELDA) has biased composition (basic and acidic residues). Residues 425 to 444 (YIVDLLAVVVPAVPTVAWLC) traverse the membrane as a helical segment.

As to quaternary structure, binds to STX1A. Interacts with DNM1; this interaction inhibits the binding of DNM1 to AMPH and DNM1-receptor-mediated endocytosis. In terms of tissue distribution, brain specific. Found in synapses.

The protein localises to the membrane. Its subcellular location is the synapse. The protein resides in the synaptosome. Functionally, inhibits SNARE complex formation by absorbing free STX1A. The sequence is that of Syntaphilin from Homo sapiens (Human).